A 1423-amino-acid chain; its full sequence is Interphotoreceptor matrix proteoglycan 2 (1423 aa).

The N-terminal stretch at 1-27 (MFAFLWKISLCLLVLGVITGDPQAVAA) is a signal peptide. At 28 to 1289 (EEKQAKDASP…EYVSEPLVVG (1262 aa)) the chain is on the extracellular side. An N-linked (GlcNAc...) asparagine glycan is attached at asparagine 150. Residues 245–358 (TEQMIEFSIV…NPTVVYTISD (114 aa)) enclose the SEA 1 domain. The tract at residues 265 to 273 (SDPDTAKYQ) is hyaluronan-binding motif involved in chondroitin sulfate A-binding. N-linked (GlcNAc...) asparagine glycans are attached at residues asparagine 325 and asparagine 375. Disordered stretches follow at residues 423-469 (AERP…DSEV), 522-559 (DSSDEFEDTGLSDDFLLPSSPSSHLVPEEPPSTDDYTA), and 577-602 (TKRTVTAEKEVVTQGSPADSSSADSL). The segment covering 523-532 (SSDEFEDTGL) has biased composition (acidic residues). The segment covering 537–546 (LLPSSPSSHL) has biased composition (low complexity). The segment covering 577-587 (TKRTVTAEKEV) has biased composition (basic and acidic residues). Asparagine 676 carries an N-linked (GlcNAc...) asparagine glycan. The interval 886 to 907 (FEVSTDTSTEEQQSLDSSLADR) is disordered. The segment covering 889-902 (STDTSTEEQQSLDS) has biased composition (polar residues). The SEA 2 domain occupies 1083–1196 (RALVVFFSLR…YSLDVESGEQ (114 aa)). Asparagine 1128, asparagine 1142, and asparagine 1160 each carry an N-linked (GlcNAc...) asparagine glycan. EGF-like domains are found at residues 1196–1234 (QADPCKFQACNEFSECLVNRWSGEAECVCNPGYLSIDGL) and 1237–1279 (NSIC…EHCE). 5 cysteine pairs are disulfide-bonded: cysteine 1200/cysteine 1211, cysteine 1205/cysteine 1222, cysteine 1240/cysteine 1253, cysteine 1247/cysteine 1263, and cysteine 1265/cysteine 1278. Positions 1266–1274 (RVGENWWYR) are hyaluronan-binding motif involved in chondroitin sulfate C-binding. The chain crosses the membrane as a helical span at residues 1290-1310 (IAIASVAGFLLVASAVIFFLA). Residues 1311–1423 (RTLRDQYTKS…FVRQHQMKLL (113 aa)) are Cytoplasmic-facing. The interval 1322–1327 (TEDSQG) is hyaluronan-binding motif involved in chondroitin sulfate C-binding.

In terms of processing, highly glycosylated (N- and O-linked carbohydrates). Expressed in retina.

Its subcellular location is the photoreceptor outer segment membrane. The protein resides in the photoreceptor inner segment membrane. It is found in the secreted. The protein localises to the extracellular space. It localises to the extracellular matrix. Its subcellular location is the interphotoreceptor matrix. Functionally, chondroitin sulfate- and hyaluronan-binding proteoglycan involved in the organization of interphotoreceptor matrix. The protein is Interphotoreceptor matrix proteoglycan 2 (IMPG2) of Gallus gallus (Chicken).